A 677-amino-acid chain; its full sequence is MTQVAKKILVTCALPYANGSIHLGHMLEHIQADVWVRYQRMRGHEVNFICADDAHGTPIMLKAQQLGITPEQMIGEMSQEHQTDFAGFNISYDNYHSTHSEENRQLSELIYSRLKENGFIKNRTISQLYDPEKGMFLPDRFVKGTCPKCKSPDQYGDNCEVCGATYSPTELIEPKSVVSGATPVMRDSEHFFFDLPSFSEMLQAWTRSGALQEQVANKMQEWFESGLQQWDISRDAPYFGFEIPNAPGKYFYVWLDAPIGYMGSFKNLCDKRGDSVSFDEYWKKDSTAELYHFIGKDIVYFHSLFWPAMLEGSNFRKPTNLFVHGYVTVNGAKMSKSRGTFIKASTWLNHFDADSLRYYYTAKLSSRIDDIDLNLEDFVQRVNADIVNKVVNLASRNAGFINKRFDGVLANELADPQLYKTFTDAAEVIGEAWESREFGKAVREIMALADLANRYVDEQAPWVVAKQEGRDADLQAICSMGINLFRVLMTYLKPVLPKLTERAEAFLNTELTWDGIQQPLLGHKVNPFKALYNRIDMKQVEALVEASKEEVKAAAAPVTGPLADDPIQETITFDDFAKVDLRVALIENAEFVEGSDKLLRLTLDLGGEKRNVFSGIRSAYPDPQALIGRHTIMVANLAPRKMRFGISEGMVMAAGPGGKDIFLLSPDAGAKPGHQVK.

A 'HIGH' region motif is present at residues 15-25; it reads PYANGSIHLGH. Residues Cys-146, Cys-149, Cys-159, and Cys-162 each contribute to the Zn(2+) site. The 'KMSKS' region motif lies at 333 to 337; the sequence is KMSKS. Lys-336 provides a ligand contact to ATP. The 103-residue stretch at 575–677 folds into the tRNA-binding domain; it reads DFAKVDLRVA…AGAKPGHQVK (103 aa).

Belongs to the class-I aminoacyl-tRNA synthetase family. MetG type 1 subfamily. As to quaternary structure, homodimer. Zn(2+) is required as a cofactor.

It is found in the cytoplasm. The enzyme catalyses tRNA(Met) + L-methionine + ATP = L-methionyl-tRNA(Met) + AMP + diphosphate. Functionally, is required not only for elongation of protein synthesis but also for the initiation of all mRNA translation through initiator tRNA(fMet) aminoacylation. The chain is Methionine--tRNA ligase from Escherichia coli (strain ATCC 8739 / DSM 1576 / NBRC 3972 / NCIMB 8545 / WDCM 00012 / Crooks).